The chain runs to 141 residues: Small ribosomal subunit protein eS17z (141 aa).

It belongs to the eukaryotic ribosomal protein eS17 family.

The polypeptide is Small ribosomal subunit protein eS17z (RPS17A) (Arabidopsis thaliana (Mouse-ear cress)).